The following is a 460-amino-acid chain: Proline--tRNA ligase (460 aa).

It belongs to the class-II aminoacyl-tRNA synthetase family. ProS type 3 subfamily. As to quaternary structure, homodimer.

It localises to the cytoplasm. The enzyme catalyses tRNA(Pro) + L-proline + ATP = L-prolyl-tRNA(Pro) + AMP + diphosphate. Catalyzes the attachment of proline to tRNA(Pro) in a two-step reaction: proline is first activated by ATP to form Pro-AMP and then transferred to the acceptor end of tRNA(Pro). This is Proline--tRNA ligase from Methanococcus maripaludis (strain DSM 14266 / JCM 13030 / NBRC 101832 / S2 / LL).